Here is a 129-residue protein sequence, read N- to C-terminus: MARKTNTRKKRVKKNIEAGVAHIRSTFNNTIVTLTDTHGNALSWSSAGALGFRGSRKSTPFAAQMAAETAAKAAMEHGLKTLEVTVKGPGAGREAAIRALQAAGLEVTAIRDVTPVPHNGCRPPKRRRV.

This sequence belongs to the universal ribosomal protein uS11 family. As to quaternary structure, part of the 30S ribosomal subunit. Interacts with proteins S7 and S18. Binds to IF-3.

In terms of biological role, located on the platform of the 30S subunit, it bridges several disparate RNA helices of the 16S rRNA. Forms part of the Shine-Dalgarno cleft in the 70S ribosome. The sequence is that of Small ribosomal subunit protein uS11 from Bacillus anthracis (strain A0248).